The chain runs to 594 residues: Trehalase (594 aa).

An N-terminal signal peptide occupies residues methionine 1–serine 27. Asparagine 56, asparagine 70, asparagine 97, and asparagine 166 each carry an N-linked (GlcNAc...) asparagine glycan. Residues arginine 190, tryptophan 197–aspartate 198, and asparagine 234 contribute to the substrate site. N-linked (GlcNAc...) asparagine glycosylation occurs at asparagine 242. Position 243–245 (arginine 243–glutamine 245) interacts with substrate. N-linked (GlcNAc...) asparagine glycosylation is found at asparagine 261 and asparagine 305. Residues arginine 312–glutamate 314 and glycine 346 contribute to the substrate site. Aspartate 348 serves as the catalytic Proton donor/acceptor. N-linked (GlcNAc...) asparagine glycosylation is found at asparagine 361, asparagine 395, asparagine 513, and asparagine 537. The Proton donor/acceptor role is filled by glutamate 549. Glutamate 564 contacts substrate.

Belongs to the glycosyl hydrolase 37 family.

It catalyses the reaction alpha,alpha-trehalose + H2O = alpha-D-glucose + beta-D-glucose. This Dictyostelium discoideum (Social amoeba) protein is Trehalase (treh).